The chain runs to 185 residues: Ribosome-recycling factor (185 aa).

Belongs to the RRF family.

The protein resides in the cytoplasm. Functionally, responsible for the release of ribosomes from messenger RNA at the termination of protein biosynthesis. May increase the efficiency of translation by recycling ribosomes from one round of translation to another. The sequence is that of Ribosome-recycling factor from Pseudomonas fluorescens (strain Pf0-1).